A 66-amino-acid chain; its full sequence is Large ribosomal subunit protein bL35 (66 aa).

The protein belongs to the bacterial ribosomal protein bL35 family.

In Synechococcus sp. (strain ATCC 27144 / PCC 6301 / SAUG 1402/1) (Anacystis nidulans), this protein is Large ribosomal subunit protein bL35.